Reading from the N-terminus, the 207-residue chain is Dephospho-CoA kinase (207 aa).

Residues 4–203 enclose the DPCK domain; sequence VIGLTGGIAS…EEGYIEKPNY (200 aa). 12–17 lines the ATP pocket; that stretch reads ASGKST.

Belongs to the CoaE family.

The protein resides in the cytoplasm. It catalyses the reaction 3'-dephospho-CoA + ATP = ADP + CoA + H(+). It participates in cofactor biosynthesis; coenzyme A biosynthesis; CoA from (R)-pantothenate: step 5/5. Catalyzes the phosphorylation of the 3'-hydroxyl group of dephosphocoenzyme A to form coenzyme A. In Staphylococcus aureus (strain MRSA252), this protein is Dephospho-CoA kinase.